A 2253-amino-acid polypeptide reads, in one-letter code: Protein Ycf2 (2253 aa).

An ATP-binding site is contributed by 1600–1607 (GFIGTGRS).

This sequence belongs to the Ycf2 family.

Its subcellular location is the plastid. The protein resides in the chloroplast stroma. Functionally, probable ATPase of unknown function. Its presence in a non-photosynthetic plant (Epifagus virginiana) and experiments in tobacco indicate that it has an essential function which is probably not related to photosynthesis. This chain is Protein Ycf2, found in Nymphaea alba (White water-lily).